Here is a 121-residue protein sequence, read N- to C-terminus: Large ribosomal subunit protein bL20c (121 aa).

It belongs to the bacterial ribosomal protein bL20 family.

It is found in the plastid. Its subcellular location is the chloroplast. Its function is as follows. Binds directly to 23S ribosomal RNA and is necessary for the in vitro assembly process of the 50S ribosomal subunit. It is not involved in the protein synthesizing functions of that subunit. In Lotus japonicus (Lotus corniculatus var. japonicus), this protein is Large ribosomal subunit protein bL20c.